A 612-amino-acid chain; its full sequence is Putative pentatricopeptide repeat-containing protein At5g40405 (612 aa).

10 PPR repeats span residues 70–104 (TLFALNSMIRAHCKSPVPEKSFDFYRRILSSGNDL), 107–141 (DNYTVNFLVQACTGLRMRETGLQVHGMTIRRGFDN), 142–172 (DPHVQTGLISLYAELGCLDSCHKVFNSIPCP), 173–203 (DFVCRTAMVTACARCGDVVFARKLFEGMPER), 204–238 (DPIAWNAMISGYAQVGESREALNVFHLMQLEGVKV), 239–273 (NGVAMISVLSACTQLGALDQGRWAHSYIERNKIKI), 274–304 (TVRLATTLVDLYAKCGDMEKAMEVFWGMEEK), 305–339 (NVYTWSSALNGLAMNGFGEKCLELFSLMKQDGVTP), 340–375 (NAVTFVSVLRGCSVVGFVDEGQRHFDSMRNEFGIEP), and 376–410 (QLEHYGCLVDLYARAGRLEDAVSIIQQMPMKPHAA). The tract at residues 411-486 (VWSSLLHASR…QPGCSVMEVN (76 aa)) is type E motif. Residues 487–517 (GEVHEFFVGDKSHPKYTQIDAVWKDISRRLR) are type E(+) motif. The tract at residues 518–612 (LAGYKADTTP…DGHCSCNGFW (95 aa)) is type DYW motif.

It belongs to the PPR family. PCMP-H subfamily.

This Arabidopsis thaliana (Mouse-ear cress) protein is Putative pentatricopeptide repeat-containing protein At5g40405 (PCMP-H14).